A 101-amino-acid chain; its full sequence is Small ribosomal subunit protein bS6 (101 aa).

The protein belongs to the bacterial ribosomal protein bS6 family.

In terms of biological role, binds together with bS18 to 16S ribosomal RNA. In Nitratidesulfovibrio vulgaris (strain DSM 19637 / Miyazaki F) (Desulfovibrio vulgaris), this protein is Small ribosomal subunit protein bS6.